A 78-amino-acid chain; its full sequence is Putative membrane protein insertion efficiency factor (78 aa).

It belongs to the UPF0161 family.

The protein resides in the cell inner membrane. Could be involved in insertion of integral membrane proteins into the membrane. In Prochlorococcus marinus (strain MIT 9312), this protein is Putative membrane protein insertion efficiency factor.